Consider the following 193-residue polypeptide: Large ribosomal subunit protein uL18 (193 aa).

The protein belongs to the universal ribosomal protein uL18 family. As to quaternary structure, part of the 50S ribosomal subunit. Contacts the 5S and 23S rRNAs.

In terms of biological role, this is one of the proteins that bind and probably mediate the attachment of the 5S RNA into the large ribosomal subunit, where it forms part of the central protuberance. This Methanococcus vannielii (strain ATCC 35089 / DSM 1224 / JCM 13029 / OCM 148 / SB) protein is Large ribosomal subunit protein uL18.